Here is a 315-residue protein sequence, read N- to C-terminus: Cytochrome f (315 aa).

The N-terminal stretch at 1–36 is a signal peptide; the sequence is MKQSLLSVLTKKSLRLLAALFLVVTSVFSLPQAAQA. Heme is bound by residues phenylalanine 37, cysteine 57, cysteine 60, and histidine 61. Residues 281-301 traverse the membrane as a helical segment; that stretch reads IKWLMVFFSAIMISQTLLVLK.

It belongs to the cytochrome f family. As to quaternary structure, the 4 large subunits of the cytochrome b6-f complex are cytochrome b6, subunit IV (17 kDa polypeptide, PetD), cytochrome f and the Rieske protein, while the 4 small subunits are PetG, PetL, PetM and PetN. The complex functions as a dimer. Heme serves as cofactor.

The protein resides in the cellular thylakoid membrane. In terms of biological role, component of the cytochrome b6-f complex, which mediates electron transfer between photosystem II (PSII) and photosystem I (PSI), cyclic electron flow around PSI, and state transitions. This Acaryochloris marina (strain MBIC 11017) protein is Cytochrome f.